The primary structure comprises 73 residues: Mucroporin-like peptide (73 aa).

A signal peptide spans 1-22 (MKVKCLLAVFLIVLIAAEHCQA). K38 is subject to Lysine amide. The propeptide occupies 44 to 73 (ELGTQFQPRQKNFMRREVDLERLFAEMPDY).

It belongs to the non-disulfide-bridged peptide (NDBP) superfamily. Short antimicrobial peptide (group 4) family. In terms of tissue distribution, expressed by the venom gland.

It is found in the secreted. The protein resides in the target cell membrane. In terms of biological role, cationic host defense peptide that have antibacterial activity by breaking membranes. Is more effective on Gram-positive than on Gram-negative bacteria. The polypeptide is Mucroporin-like peptide (Lychas mucronatus (Chinese swimming scorpion)).